We begin with the raw amino-acid sequence, 461 residues long: Argininosuccinate lyase (461 aa).

Belongs to the lyase 1 family. Argininosuccinate lyase subfamily.

The protein resides in the cytoplasm. It carries out the reaction 2-(N(omega)-L-arginino)succinate = fumarate + L-arginine. It participates in amino-acid biosynthesis; L-arginine biosynthesis; L-arginine from L-ornithine and carbamoyl phosphate: step 3/3. This is Argininosuccinate lyase from Streptococcus thermophilus (strain CNRZ 1066).